We begin with the raw amino-acid sequence, 388 residues long: Succinate--CoA ligase [ADP-forming] subunit beta (388 aa).

The ATP-grasp domain maps to 9 to 244; the sequence is KEILRKFGVA…PDEEDPKETQ (236 aa). Residues Lys46, 53–55, Glu99, Cys102, and Glu107 contribute to the ATP site; that span reads GRG. Asn199 and Asp213 together coordinate Mg(2+). Residues Asn264 and 321–323 contribute to the substrate site; that span reads GIM.

Belongs to the succinate/malate CoA ligase beta subunit family. In terms of assembly, heterotetramer of two alpha and two beta subunits. Mg(2+) is required as a cofactor.

It carries out the reaction succinate + ATP + CoA = succinyl-CoA + ADP + phosphate. It catalyses the reaction GTP + succinate + CoA = succinyl-CoA + GDP + phosphate. It functions in the pathway carbohydrate metabolism; tricarboxylic acid cycle; succinate from succinyl-CoA (ligase route): step 1/1. Its function is as follows. Succinyl-CoA synthetase functions in the citric acid cycle (TCA), coupling the hydrolysis of succinyl-CoA to the synthesis of either ATP or GTP and thus represents the only step of substrate-level phosphorylation in the TCA. The beta subunit provides nucleotide specificity of the enzyme and binds the substrate succinate, while the binding sites for coenzyme A and phosphate are found in the alpha subunit. This is Succinate--CoA ligase [ADP-forming] subunit beta from Anaeromyxobacter dehalogenans (strain 2CP-C).